A 191-amino-acid polypeptide reads, in one-letter code: Protein Ves (191 aa).

The protein belongs to the Ves family.

This Escherichia coli (strain SE11) protein is Protein Ves.